A 241-amino-acid polypeptide reads, in one-letter code: Hydantoin racemase (241 aa).

It belongs to the HyuE racemase family. In terms of assembly, homotetramer.

The catalysed reaction is a D-5-monosubstituted hydantoin = a L-5-monosubstituted hydantoin. It catalyses the reaction D-5-benzylhydantoin = L-5-benzylhydantoin. It carries out the reaction D-5-isobutylhydantoin = L-5-isobutylhydantoin. With respect to regulation, inhibited by Cu(2+), Hg(2+), Pb(2+) and Zn(2+). The activity is twofold lower in the presence of Mn(2+), Co(2+) and Ni(2+). The insignificant effect of the metal chelating agent EDTA on the hydantoin racemase activity would indicate that it is not a metalloenzyme. Functionally, may be involved in the asymmetric conversion of racemic 5-substituted hydantoins to the corresponding L-amino acids. Catalyzes the racemization via enolization of D- and L-5-monosubstituted hydantoins. This chain is Hydantoin racemase, found in Rhizobium meliloti (Ensifer meliloti).